Consider the following 360-residue polypeptide: UDP-3-O-acylglucosamine N-acyltransferase (360 aa).

The active-site Proton acceptor is the H248.

Belongs to the transferase hexapeptide repeat family. LpxD subfamily. As to quaternary structure, homotrimer.

The enzyme catalyses a UDP-3-O-[(3R)-3-hydroxyacyl]-alpha-D-glucosamine + a (3R)-hydroxyacyl-[ACP] = a UDP-2-N,3-O-bis[(3R)-3-hydroxyacyl]-alpha-D-glucosamine + holo-[ACP] + H(+). Its pathway is bacterial outer membrane biogenesis; LPS lipid A biosynthesis. Catalyzes the N-acylation of UDP-3-O-acylglucosamine using 3-hydroxyacyl-ACP as the acyl donor. Is involved in the biosynthesis of lipid A, a phosphorylated glycolipid that anchors the lipopolysaccharide to the outer membrane of the cell. The sequence is that of UDP-3-O-acylglucosamine N-acyltransferase from Chlamydia pneumoniae (Chlamydophila pneumoniae).